A 311-amino-acid polypeptide reads, in one-letter code: Olfactory receptor 5AN1 (311 aa).

Residues methionine 1–lysine 26 lie on the Extracellular side of the membrane. N-linked (GlcNAc...) asparagine glycosylation is present at asparagine 6. The helical transmembrane segment at valine 27–isoleucine 47 threads the bilayer. The Cytoplasmic portion of the chain corresponds to valine 48–histidine 55. A helical transmembrane segment spans residues leucine 56–serine 76. Residues serine 77–isoleucine 100 lie on the Extracellular side of the membrane. An intrachain disulfide couples cysteine 98 to cysteine 190. A helical transmembrane segment spans residues glutamine 101–tyrosine 121. Topologically, residues aspartate 122–serine 134 are cytoplasmic. The helical transmembrane segment at serine 135–threonine 155 threads the bilayer. The Extracellular segment spans residues alanine 156–glutamine 197. Residues valine 198–serine 218 traverse the membrane as a helical segment. The Cytoplasmic segment spans residues tyrosine 219–alanine 238. A helical membrane pass occupies residues phenylalanine 239–valine 259. At tyrosine 260 to aspartate 272 the chain is on the extracellular side. The chain crosses the membrane as a helical span at residues arginine 273–leucine 293. Topologically, residues arginine 294–cysteine 311 are cytoplasmic.

The protein belongs to the G-protein coupled receptor 1 family.

It localises to the cell membrane. Odorant receptor for musk, which specifically recognizes muscone, musk xylol, and musk ketone. Ligand-binding causes a conformation change that triggers signaling via G(s)-class of G alpha protein GNAL, activating adenylyl cyclase. The polypeptide is Olfactory receptor 5AN1 (Homo sapiens (Human)).